A 489-amino-acid chain; its full sequence is Interferon gamma receptor 1 (489 aa).

The first 17 residues, 1–17, serve as a signal peptide directing secretion; the sequence is MALLFLLPLVMQGVSRA. Over 18–245 the chain is Extracellular; sequence EMGTADLGPS…ITIFNSSIKG (228 aa). N-linked (GlcNAc...) asparagine glycans are attached at residues N34, N79, and N86. A disulfide bridge links C77 with C85. A disulfide bridge links C122 with C167. N179 carries N-linked (GlcNAc...) asparagine glycosylation. 2 disulfides stabilise this stretch: C195/C200 and C214/C235. N240 is a glycosylation site (N-linked (GlcNAc...) asparagine). A helical transmembrane segment spans residues 246–266; it reads SLWIPVVAALLLFLVLSLVFI. The Cytoplasmic segment spans residues 267–489; the sequence is CFYIKKINPL…RPTEDSKEFS (223 aa). Residues 329 to 437 are disordered; the sequence is ATVPGMHTED…SEFPPNNKGE (109 aa). Residues 335-348 are compositionally biased toward basic and acidic residues; it reads HTEDNPGKVEHTEE. A compositionally biased stretch (polar residues) spans 349–360; sequence LSSITEVVTTEE. S369 is subject to Phosphoserine. T372 carries the phosphothreonine modification. Position 378 is a phosphoserine (S378). Positions 379-391 are enriched in low complexity; sequence SSPLSSNQSEPGS. Basic and acidic residues predominate over residues 401-412; the sequence is NCSESDHSRNGF. A Phosphoserine modification is found at S403. A compositionally biased stretch (low complexity) spans 415–429; the sequence is DSSCLESHSSLSDSE. Position 457 is a phosphotyrosine (Y457).

It belongs to the type II cytokine receptor family. Monomer. Heterodimer with IFNGR2, to form the IFNG receptor complex. Interacts with JAK1. Interacts (when phosphorylated) with STAT1. Interacts with SOCS1. Phosphorylated at Ser/Thr residues. Phosphorylation of Tyr-457 is required for IFNG receptor signal transduction. Influenza virus infection leads to phosphorylation in a CSNK1A1-dependent manner. Post-translationally, ubiquitinated after phosphorylation in a CSNK1A1-dependent manner, leading to the lysosome-dependent degradation. Proteasomally degraded through 'Lys-48'-mediated ubiquitination. Ubiquitination is necessary for efficient IFNGR1 signaling.

The protein localises to the cell membrane. Functionally, receptor subunit for interferon gamma/INFG that plays crucial roles in antimicrobial, antiviral, and antitumor responses by activating effector immune cells and enhancing antigen presentation. Associates with transmembrane accessory factor IFNGR2 to form a functional receptor. Upon ligand binding, the intracellular domain of IFNGR1 opens out to allow association of downstream signaling components JAK1 and JAK2. In turn, activated JAK1 phosphorylates IFNGR1 to form a docking site for STAT1. Subsequent phosphorylation of STAT1 leads to dimerization, translocation to the nucleus, and stimulation of target gene transcription. STAT3 can also be activated in a similar manner although activation seems weaker. IFNGR1 intracellular domain phosphorylation also provides a docking site for SOCS1 that regulates the JAK-STAT pathway by competing with STAT1 binding to IFNGR1. This Homo sapiens (Human) protein is Interferon gamma receptor 1.